An 884-amino-acid chain; its full sequence is Probable ribonuclease ZC3H12C (884 aa).

The segment at 66–108 (KPTMDTVNSGKEGKGVSEENVSSGDSEGSTSSDHESEQLSSLS) is disordered. The span at 87-96 (SSGDSEGSTS) shows a compositional bias: low complexity. At S231 the chain carries Phosphoserine. An RNase NYN domain is found at 246–401 (LRPVVIDGSN…LGRHGPSLDN (156 aa)). Residues 411 to 436 (EHKKQPCPYGKKCTYGHKCKYYHPER) form a C3H1-type zinc finger. Over residues 456–478 (AAKTTNEGGLVKSNSVPCSTKAD) the composition is skewed to polar residues. Disordered stretches follow at residues 456–548 (AAKT…SGVH), 716–739 (VGAR…KAPH), and 755–776 (SRLY…EGLG). The segment covering 500–516 (VYQDIEEKLPTKNKLET) has biased composition (basic and acidic residues). The segment covering 518–543 (SVPSLVSIPATSTAKPQSTTPLSNGL) has biased composition (polar residues).

The protein belongs to the ZC3H12 family. Requires Mg(2+) as cofactor.

May function as RNase and regulate the levels of target RNA species. This chain is Probable ribonuclease ZC3H12C (Zc3h12c), found in Mus musculus (Mouse).